Consider the following 566-residue polypeptide: FAD-dependent monooxygenase asqG (566 aa).

Residues 1-19 (MAAFTVIIIGGSISGLTLA) form the signal peptide. Residues Glu33, Val47, Arg113, Asp313, and Ala326 each coordinate FAD. Helical transmembrane passes span 448-468 (ASST…GAVW) and 482-502 (GYTL…ASAV).

Belongs to the paxM FAD-dependent monooxygenase family. FAD serves as cofactor.

It is found in the membrane. It catalyses the reaction [(1'E)-3'-hydroxy-3',7'-dimethylocta-1',6'-dien-1'-yl]-quinolinone B + NADPH + O2 + H(+) = [(1'E)-5'-(3',3'-dimethyloxiran-2'-yl)-3'-hydroxy-3'-methylpent-1'-en-1'-yl]-quinolinone B + NADP(+) + H2O. It participates in secondary metabolite biosynthesis. The protein operates within alkaloid biosynthesis. It functions in the pathway mycotoxin biosynthesis. Its function is as follows. FAD-dependent monooxygenase; part of the gene cluster that mediates the biosynthesis of the aspoquinolone mycotoxins. Within the pathway, the FAD-dependent monooxygenase asqG catalyzes the epoxidation of the terminal C7'-C8' olefin to produce the intermediate [(1'E)-5'-(3',3'-dimethyloxiran-2'-yl)-3'-hydroxy-3'-methylpent-1'-en-1'-yl]-quinolinone B. The first step of the pathway is catalyzed by the nonribosomal peptide synthetase asqK that condenses anthranilic acid and O-methyl-L-tyrosine to produce 4'-methoxycyclopeptin. 4'-methoxycyclopeptin is then converted to 4'-methoxydehydrocyclopeptin by the ketoglutarate-dependent dioxygenase asqJ. AsqJ also converts its first product 4'-methoxydehydrocyclopeptin to 4'-methoxycyclopenin. The following conversion of 4'-methoxycyclopenin into 4'-methoxyviridicatin is catalyzed by the cyclopenase asqI. 4'-methoxyviridicatin is the precursor of quinolone natural products, and is further converted to quinolinone B. The prenyltransferase asqH1 then catalyzes the canonical Friedel-Crafts alkylation of quinolinone B with dimethylallyl cation to yield dimethylallyl quinolone, which is subjected to FAD-dependent dehydrogenation by the FAD-linked oxidoreductase asqF to yield conjugated aryl diene. The delta(3') double bond then serves as the site of the second alkylation with DMAPP catalyzed by the prenyltransferase asqH2 to yield a carbenium ion intermediate, which can be attacked by H(2)O to yield a styrenyl quinolone containing a C3'-hydroxyprenyl chain. The FAD-dependent monooxygenase asqG performs epoxidation of the terminal C7'-C8' olefin. Finally, after dehydratation of the epoxide at C3 by asqC, the quinolone epoxide rearrangement protein asqO catalyzes an enzymatic 3-exo-tet cyclization to yield the cyclopropyl-THF ring system in aspoquinolone. The sequence is that of FAD-dependent monooxygenase asqG from Emericella nidulans (strain FGSC A4 / ATCC 38163 / CBS 112.46 / NRRL 194 / M139) (Aspergillus nidulans).